We begin with the raw amino-acid sequence, 451 residues long: Aspartate aminotransferase, mitochondrial (451 aa).

The L-aspartate site is built by Gly52, Trp155, and Asn216. Lys286 carries the post-translational modification N6-(pyridoxal phosphate)lysine. Arg423 is a binding site for L-aspartate.

This sequence belongs to the class-I pyridoxal-phosphate-dependent aminotransferase family. In terms of assembly, homodimer. Requires pyridoxal 5'-phosphate as cofactor.

It localises to the mitochondrion matrix. The catalysed reaction is L-aspartate + 2-oxoglutarate = oxaloacetate + L-glutamate. In terms of biological role, plays a key role in amino acid metabolism. Important for metabolite exchange between mitochondria and cytosol. In Saccharomyces cerevisiae (strain ATCC 204508 / S288c) (Baker's yeast), this protein is Aspartate aminotransferase, mitochondrial (AAT1).